A 591-amino-acid chain; its full sequence is Aspartate--tRNA ligase (591 aa).

E176 contacts L-aspartate. The segment at 200–203 (QILK) is aspartate. L-aspartate is bound at residue R222. ATP is bound by residues 222-224 (RDE) and Q231. H450 is an L-aspartate binding site. Position 484 (E484) interacts with ATP. R491 serves as a coordination point for L-aspartate. Residue 536-539 (GLDR) participates in ATP binding.

Belongs to the class-II aminoacyl-tRNA synthetase family. Type 1 subfamily. As to quaternary structure, homodimer.

It localises to the cytoplasm. The catalysed reaction is tRNA(Asp) + L-aspartate + ATP = L-aspartyl-tRNA(Asp) + AMP + diphosphate. In terms of biological role, catalyzes the attachment of L-aspartate to tRNA(Asp) in a two-step reaction: L-aspartate is first activated by ATP to form Asp-AMP and then transferred to the acceptor end of tRNA(Asp). The polypeptide is Aspartate--tRNA ligase (Listeria monocytogenes serotype 4a (strain HCC23)).